The following is a 261-amino-acid chain: 5'-nucleotidase SurE (261 aa).

A divalent metal cation contacts are provided by Asp-8, Asp-9, Ser-40, and Asn-94.

This sequence belongs to the SurE nucleotidase family. A divalent metal cation serves as cofactor.

The protein resides in the cytoplasm. The catalysed reaction is a ribonucleoside 5'-phosphate + H2O = a ribonucleoside + phosphate. In terms of biological role, nucleotidase that shows phosphatase activity on nucleoside 5'-monophosphates. This Anaplasma marginale (strain Florida) protein is 5'-nucleotidase SurE.